Here is a 491-residue protein sequence, read N- to C-terminus: V-type proton ATPase subunit B 1 (491 aa).

An ATP-binding site is contributed by arginine 380.

It belongs to the ATPase alpha/beta chains family. V-ATPase is a heteromultimeric enzyme made up of two complexes: the ATP-hydrolytic V1 complex and the proton translocation V0 complex. The V1 complex consists of three catalytic AB heterodimers that form a heterohexamer, three peripheral stalks each consisting of EG heterodimers, one central rotor including subunits D and F, and the regulatory subunits C and H. The proton translocation complex V0 consists of the proton transport subunit a, a ring of proteolipid subunits c9c'', rotary subunit d, subunits e and f, and the accessory subunits vah-19/Ac45 and vah-20/PRR. Expressed ubiquitously. Highly expressed in the H-shaped excretory cell, the excretory pore, the intestine, and hypodermal cells. Expressed in the nervous system. Expressed at low levels in muscles.

Non-catalytic subunit of the V1 complex of vacuolar(H+)-ATPase (V-ATPase), a multisubunit enzyme composed of a peripheral complex (V1) that hydrolyzes ATP and a membrane integral complex (V0) that translocates protons. V-ATPase is responsible for acidifying and maintaining the pH of intracellular compartments and in some cell types, is targeted to the plasma membrane, where it is responsible for acidifying the extracellular environment. Essential for the proper assembly and activity of V-ATPase. Required maternally for early embryogenesis and zygotically during morphogenesis. Specifically, involved in the clearance of apoptotic cell corpses in embryos. Also, during embryonic development, the V-ATPase is required to repress fusion of epidermal cells probably by negatively regulating eff-1-mediated cell fusion. In neurons, required for necrotic cell death by promoting intracellular acidification. Required for cell death induced by hypoxia. Required for acidification of synaptic vesicles and the release of neurotransmitters from adult neurons. In Caenorhabditis elegans, this protein is V-type proton ATPase subunit B 1.